We begin with the raw amino-acid sequence, 108 residues long: Con-Ins K1 (108 aa).

The signal sequence occupies residues Met-1 to Gly-24. The propeptide occupies Ser-25–Thr-28. 3 disulfide bridges follow: Cys-41–Cys-90, Cys-53–Cys-103, and Cys-89–Cys-94. 4-carboxyglutamate is present on Glu-44. The propeptide at Arg-57–Arg-83 is c peptide. Residue Glu-87 is modified to 4-carboxyglutamate. Glutamine amide is present on Gln-107.

Belongs to the insulin family. Heterodimer of A and B chains; disulfide-linked. Expressed by the venom gland.

It is found in the secreted. In terms of biological role, this venom insulin, from a fish-hunting cone snail, facilitates prey capture by rapidly inducing hypoglycemic shock. It is one of the smallest known insulin found in nature and lacks the C-terminal segment of the B chain that, in human insulin, mediates engagement of the insulin receptor (INSR) and assembly of the hormone's hexameric storage form. Despite lacking this segment, it both binds and activates human insulin receptor (long isoform (HIR-B)) with a moderate potency (EC(50)=30.45 nM). In vivo, intraperitoneal injection of this peptide into zebrafish lowers blood glucose with a lower potency than human insulin. In addition, when applied to water, this peptide reduces overall locomotor activity of zebrafish larvae, observed as a significant decrease in the percentage of time spent swimming and movement frequency. When tested on a mouse model of diabetes, this insulin also lowers blood glucose with a 20-fold lower potency than human insulin. The protein is Con-Ins K1 of Conus kinoshitai (Kinoshita's cone).